We begin with the raw amino-acid sequence, 288 residues long: Bifunctional protein FolD (288 aa).

NADP(+) contacts are provided by residues 166–168 and Ile232; that span reads GAS.

The protein belongs to the tetrahydrofolate dehydrogenase/cyclohydrolase family. Homodimer.

It catalyses the reaction (6R)-5,10-methylene-5,6,7,8-tetrahydrofolate + NADP(+) = (6R)-5,10-methenyltetrahydrofolate + NADPH. The catalysed reaction is (6R)-5,10-methenyltetrahydrofolate + H2O = (6R)-10-formyltetrahydrofolate + H(+). Its pathway is one-carbon metabolism; tetrahydrofolate interconversion. Functionally, catalyzes the oxidation of 5,10-methylenetetrahydrofolate to 5,10-methenyltetrahydrofolate and then the hydrolysis of 5,10-methenyltetrahydrofolate to 10-formyltetrahydrofolate. The chain is Bifunctional protein FolD from Escherichia fergusonii (strain ATCC 35469 / DSM 13698 / CCUG 18766 / IAM 14443 / JCM 21226 / LMG 7866 / NBRC 102419 / NCTC 12128 / CDC 0568-73).